The primary structure comprises 255 residues: Thiazole synthase (255 aa).

Lys-96 serves as the catalytic Schiff-base intermediate with DXP. 1-deoxy-D-xylulose 5-phosphate is bound by residues Gly-157, 183–184, and 205–206; these read AG and NT.

This sequence belongs to the ThiG family. Homotetramer. Forms heterodimers with either ThiH or ThiS.

The protein localises to the cytoplasm. It carries out the reaction [ThiS sulfur-carrier protein]-C-terminal-Gly-aminoethanethioate + 2-iminoacetate + 1-deoxy-D-xylulose 5-phosphate = [ThiS sulfur-carrier protein]-C-terminal Gly-Gly + 2-[(2R,5Z)-2-carboxy-4-methylthiazol-5(2H)-ylidene]ethyl phosphate + 2 H2O + H(+). The protein operates within cofactor biosynthesis; thiamine diphosphate biosynthesis. Its function is as follows. Catalyzes the rearrangement of 1-deoxy-D-xylulose 5-phosphate (DXP) to produce the thiazole phosphate moiety of thiamine. Sulfur is provided by the thiocarboxylate moiety of the carrier protein ThiS. In vitro, sulfur can be provided by H(2)S. The chain is Thiazole synthase from Geobacillus sp. (strain WCH70).